The following is a 261-amino-acid chain: Claudin-18 (261 aa).

At 1 to 6 (MATTTC) the chain is on the cytoplasmic side. Residues 7 to 27 (QVVGLLLSLLGLAGCIAATGM) form a helical membrane-spanning segment. Topologically, residues 28–80 (DMWSTQDLYDNPVTSVFQYEGLWRSCVQQSSGFTECRPYFTILGLPAMLQAVR) are extracellular. The helical transmembrane segment at 81-101 (ALMIVGIVLGVIGILVSIFAL) threads the bilayer. Residues 102-122 (KCIRIGSMDDSAKAKMTLTSG) lie on the Cytoplasmic side of the membrane. The chain crosses the membrane as a helical span at residues 123-143 (IMFIISGVCAIIGVSVFANML). At 144–173 (VTNFWMSTANMYSGMGGMVQTVQTRYTFGA) the chain is on the extracellular side. Residues 174–194 (ALFVGWIAGGLTLIGGVMMCI) traverse the membrane as a helical segment. The Cytoplasmic segment spans residues 195–261 (ACRGLTPDDR…QSHPTKYDYV (67 aa)). The required for role in regulation of RANKL-induced osteoclast differentiation stretch occupies residues 195-261 (ACRGLTPDDR…QSHPTKYDYV (67 aa)). S214 is subject to Phosphoserine. Residues 242-261 (DGGARTEDDEQSHPTKYDYV) form a disordered region.

The protein belongs to the claudin family. In terms of assembly, interacts with TJP2/ZO-2. Interacts with TJP1/ZO-1. Interacts with YAP1 (phosphorylated); the interaction sequesters YAP1 away from the nucleus and thereby restricts transcription of YAP1 target genes. Interacts with CLDN19. In terms of tissue distribution, expressed in the lung (at protein level).

The protein resides in the cell junction. The protein localises to the tight junction. It localises to the cell membrane. Its function is as follows. Involved in alveolar fluid homeostasis via regulation of alveolar epithelial tight junction composition and therefore ion transport and solute permeability, potentially via downstream regulation of the actin cytoskeleton organization and beta-2-adrenergic signaling. Required for lung alveolarization and maintenance of the paracellular alveolar epithelial barrier. Acts to maintain epithelial progenitor cell proliferation and organ size, via regulation of YAP1 localization away from the nucleus and thereby restriction of YAP1 target gene transcription. Acts as a negative regulator of RANKL-induced osteoclast differentiation, potentially via relocation of TJP2/ZO-2 away from the nucleus, subsequently involved in bone resorption in response to calcium deficiency. Mediates the osteoprotective effects of estrogen, potentially via acting downstream of estrogen signaling independently of RANKL signaling pathways. In terms of biological role, required for the formation of the gastric paracellular barrier via its role in tight junction formation, thereby involved in the response to gastric acidification. This is Claudin-18 from Rattus norvegicus (Rat).